The primary structure comprises 110 residues: MEIEKTNRMNALFEFYAALLTDKQMNYIELYYADDYSLAEIAEESGVSRQAVYDNIKRTEKILEAYEMKLHMYSDYIVRSQIFDDILEKYTDDAFLQEKISILSSIDNRD.

Belongs to the UPF0122 family.

Its function is as follows. Might take part in the signal recognition particle (SRP) pathway. This is inferred from the conservation of its genetic proximity to ftsY/ffh. May be a regulatory protein. The chain is UPF0122 protein gbs1018 from Streptococcus agalactiae serotype III (strain NEM316).